A 197-amino-acid chain; its full sequence is A-type ATP synthase subunit E (197 aa).

This sequence belongs to the V-ATPase E subunit family. In terms of assembly, has multiple subunits with at least A(3), B(3), C, D, E, F, H, I and proteolipid K(x).

It is found in the cell membrane. Functionally, component of the A-type ATP synthase that produces ATP from ADP in the presence of a proton gradient across the membrane. This chain is A-type ATP synthase subunit E, found in Thermococcus gammatolerans (strain DSM 15229 / JCM 11827 / EJ3).